The sequence spans 218 residues: Tegument protein UL51 homolog (218 aa).

C11 carries S-palmitoyl cysteine; by host lipidation. The interval 199-218 (APPPVVRQPEHSGPTELALT) is disordered.

Belongs to the herpesviridae UL51 family. Homodimer. Interacts with BBRF2; the BBRF2-BSRF1 complexes oligomerize which might play a role in tethering the viral nucleocapsids to the host Golgi membrane during secondary envelopment. Interacts with BGLF3.5. Interacts with BALF1. Interacts with glycoprotein gB. Interacts with glycoprotein heterodimer gH/gL. Phosphorylated. In terms of processing, palmitoylation is necessary for Golgi localization.

It localises to the host cytoplasm. The protein localises to the virion. The protein resides in the host Golgi apparatus. In terms of biological role, plays several roles during the time course of infection, including egress of virus particles from the perinuclear space and secondary envelopment of cytoplasmic capsids that bud into specific trans-Golgi network (TGN)-derived membranes. This is Tegument protein UL51 homolog from Homo sapiens (Human).